Reading from the N-terminus, the 85-residue chain is Acyl carrier protein (85 aa).

Positions 4–79 (DELFEKVKEI…NAVNLLSEKL (76 aa)) constitute a Carrier domain. S39 bears the O-(pantetheine 4'-phosphoryl)serine mark.

This sequence belongs to the acyl carrier protein (ACP) family. 4'-phosphopantetheine is transferred from CoA to a specific serine of apo-ACP by AcpS. This modification is essential for activity because fatty acids are bound in thioester linkage to the sulfhydryl of the prosthetic group.

It localises to the cytoplasm. It functions in the pathway lipid metabolism; fatty acid biosynthesis. Functionally, carrier of the growing fatty acid chain in fatty acid biosynthesis. The polypeptide is Acyl carrier protein (Petrotoga mobilis (strain DSM 10674 / SJ95)).